The chain runs to 163 residues: MFLFKTTNNLRKSLSNKFFCTRYSKNHLWISINNNNNSNNNNNNNNNIIIGTLGLTENGPINKFDDVLYIKFPIIKDENQVDDEPLTISLDTISDQILLNSPIRNCKLISINQDVLDYPNYINSSPMSKGWLCKIKFSNINDFNSLMNKNEYDNYCKNKIIKI.

A mitochondrion-targeting transit peptide spans M1 to Y23. Residues I50–K136 enclose the Lipoyl-binding domain.

Belongs to the GcvH family.

Its subcellular location is the mitochondrion. This chain is Glycine cleavage system H-like protein gcvH5, mitochondrial (gcvH5), found in Dictyostelium discoideum (Social amoeba).